The following is a 999-amino-acid chain: uncharacterized protein (999 aa).

The segment covering 45–128 (NSNNIGNGNG…TPTITPSSPS (84 aa)) has biased composition (low complexity). Residues 45–129 (NSNNIGNGNG…PTITPSSPSV (85 aa)) form a disordered region. Residues 723-767 (YQQSQQQQSQQQQQQQQQQQQQQQQQQQQQQQQQQQQQQQQQQQQ) adopt a coiled-coil conformation. A compositionally biased stretch (low complexity) spans 873–887 (NDINNANNSNNNNNN). A disordered region spans residues 873–904 (NDINNANNSNNNNNNQSQVLLSPNRNKDGTLN). The helical transmembrane segment at 976–996 (LFSLVLILAFIWFFFEIYFFF) threads the bilayer.

It localises to the membrane. This is an uncharacterized protein from Dictyostelium discoideum (Social amoeba).